The chain runs to 379 residues: Citrate utilization protein B (379 aa).

[4Fe-4S] cluster contacts are provided by C28, C31, C34, C38, C62, C65, C68, and C72.

The protein is Citrate utilization protein B (citB) of Escherichia coli.